We begin with the raw amino-acid sequence, 202 residues long: Dephospho-CoA kinase (202 aa).

The DPCK domain maps to 5-202; sequence IVGLTGGIAS…DADYRARSDR (198 aa). 13-18 lines the ATP pocket; sequence ASGKSA.

This sequence belongs to the CoaE family.

Its subcellular location is the cytoplasm. It catalyses the reaction 3'-dephospho-CoA + ATP = ADP + CoA + H(+). It functions in the pathway cofactor biosynthesis; coenzyme A biosynthesis; CoA from (R)-pantothenate: step 5/5. Its function is as follows. Catalyzes the phosphorylation of the 3'-hydroxyl group of dephosphocoenzyme A to form coenzyme A. This Xanthomonas oryzae pv. oryzae (strain MAFF 311018) protein is Dephospho-CoA kinase.